A 455-amino-acid chain; its full sequence is Bifunctional protein GlmU (455 aa).

The segment at 1-227 (MKLKAIILAA…YEEIMAVNSR (227 aa)) is pyrophosphorylase. UDP-N-acetyl-alpha-D-glucosamine-binding positions include 8–11 (LAAG), Lys22, Gln72, and 77–78 (GT). Asp100 provides a ligand contact to Mg(2+). UDP-N-acetyl-alpha-D-glucosamine contacts are provided by Gly137, Glu152, Asn167, and Asn225. Residue Asn225 coordinates Mg(2+). The tract at residues 228-248 (EQLADVEAIMRRRIAKKHMAN) is linker. The tract at residues 249 to 455 (GVTIMNPEHV…WTKRKGLLKK (207 aa)) is N-acetyltransferase. Residues Arg330 and Lys348 each contribute to the UDP-N-acetyl-alpha-D-glucosamine site. Residue His360 is the Proton acceptor of the active site. UDP-N-acetyl-alpha-D-glucosamine-binding residues include Tyr363 and Asn374. Acetyl-CoA-binding positions include 383-384 (NY), Ser402, Cys420, and Arg437.

This sequence in the N-terminal section; belongs to the N-acetylglucosamine-1-phosphate uridyltransferase family. The protein in the C-terminal section; belongs to the transferase hexapeptide repeat family. In terms of assembly, homotrimer. It depends on Mg(2+) as a cofactor.

The protein localises to the cytoplasm. It catalyses the reaction alpha-D-glucosamine 1-phosphate + acetyl-CoA = N-acetyl-alpha-D-glucosamine 1-phosphate + CoA + H(+). The catalysed reaction is N-acetyl-alpha-D-glucosamine 1-phosphate + UTP + H(+) = UDP-N-acetyl-alpha-D-glucosamine + diphosphate. It functions in the pathway nucleotide-sugar biosynthesis; UDP-N-acetyl-alpha-D-glucosamine biosynthesis; N-acetyl-alpha-D-glucosamine 1-phosphate from alpha-D-glucosamine 6-phosphate (route II): step 2/2. Its pathway is nucleotide-sugar biosynthesis; UDP-N-acetyl-alpha-D-glucosamine biosynthesis; UDP-N-acetyl-alpha-D-glucosamine from N-acetyl-alpha-D-glucosamine 1-phosphate: step 1/1. It participates in bacterial outer membrane biogenesis; LPS lipid A biosynthesis. In terms of biological role, catalyzes the last two sequential reactions in the de novo biosynthetic pathway for UDP-N-acetylglucosamine (UDP-GlcNAc). The C-terminal domain catalyzes the transfer of acetyl group from acetyl coenzyme A to glucosamine-1-phosphate (GlcN-1-P) to produce N-acetylglucosamine-1-phosphate (GlcNAc-1-P), which is converted into UDP-GlcNAc by the transfer of uridine 5-monophosphate (from uridine 5-triphosphate), a reaction catalyzed by the N-terminal domain. The protein is Bifunctional protein GlmU of Alkaliphilus oremlandii (strain OhILAs) (Clostridium oremlandii (strain OhILAs)).